A 511-amino-acid chain; its full sequence is Cytochrome P450 26B1 (511 aa).

Heme is bound at residue Cys440.

The protein belongs to the cytochrome P450 family. Heme serves as cofactor.

The protein localises to the endoplasmic reticulum membrane. It localises to the microsome membrane. It carries out the reaction all-trans-retinoate + reduced [NADPH--hemoprotein reductase] + O2 = all-trans-4-hydroxyretinoate + oxidized [NADPH--hemoprotein reductase] + H2O + H(+). It catalyses the reaction all-trans-retinoate + reduced [NADPH--hemoprotein reductase] + O2 = all-trans-18-hydroxyretinoate + oxidized [NADPH--hemoprotein reductase] + H2O + H(+). Functionally, a cytochrome P450 monooxygenase involved in the metabolism of retinoates (RAs), the active metabolites of vitamin A, and critical signaling molecules in animals. RAs exist as at least four different isomers: all-trans-RA (atRA), 9-cis-RA, 13-cis-RA, and 9,13-dicis-RA, where atRA is considered to be the biologically active isomer, although 9-cis-RA and 13-cis-RA also have activity. Catalyzes the hydroxylation of atRA primarily at C-4 and C-18, thereby contributing to the regulation of atRA homeostasis and signaling. Hydroxylation of atRA limits its biological activity and initiates a degradative process leading to its eventual elimination. Involved in the convertion of atRA to all-trans-4-oxo-RA. Can oxidize all-trans-13,14-dihydroretinoate (DRA) to metabolites which could include all-trans-4-oxo-DRA, all-trans-4-hydroxy-DRA, all-trans-5,8-epoxy-DRA, and all-trans-18-hydroxy-DRA. This chain is Cytochrome P450 26B1 (cyp26b1), found in Xenopus tropicalis (Western clawed frog).